The primary structure comprises 354 residues: Homer protein homolog 2 (354 aa).

A WH1 domain is found at 1–110 (MGEQPIFTTR…EKFQEVKEAA (110 aa)). Positions 92–122 (SEQQLTKFAEKFQEVKEAAKIAKDKTQEKIE) form a coiled coil. Residues 112-122 (IAKDKTQEKIE) show a composition bias toward basic and acidic residues. The segment at 112–166 (IAKDKTQEKIETSSNHSQESGRETPSSTQASSVNGTDDEKASHAGPANTHLKSEN) is disordered. Positions 123–146 (TSSNHSQESGRETPSSTQASSVNG) are enriched in polar residues. A coiled-coil region spans residues 160–329 (THLKSENDKL…RHLKVELKSF (170 aa)).

This sequence belongs to the Homer family. In terms of assembly, forms coiled-coil structures that mediate homo- and heteromultimerization. Interacts with NFATC2; interaction is reduced by AKT activation. Interacts with NFATC1 and NFATC4. Interacts with DAGLA (via PPXXF motif); this interaction is required for the cell membrane localization of DAGLA.

The protein resides in the cytoplasm. Its subcellular location is the cell membrane. It is found in the postsynaptic density. The protein localises to the synapse. It localises to the cell projection. The protein resides in the stereocilium. In terms of biological role, postsynaptic density scaffolding protein. Binds and cross-links cytoplasmic regions of GRM1, GRM5, ITPR1, DNM3, RYR1, RYR2, SHANK1 and SHANK3. By physically linking GRM1 and GRM5 with ER-associated ITPR1 receptors, it aids the coupling of surface receptors to intracellular calcium release. May also couple GRM1 to PI3 kinase through its interaction with AGAP2. Isoforms can be differently regulated and may play an important role in maintaining the plasticity at glutamatergic synapses. Required for normal hearing. Negatively regulates T cell activation by inhibiting the calcineurin-NFAT pathway. Acts by competing with calcineurin/PPP3CA for NFAT protein binding, hence preventing NFAT activation by PPP3CA. The chain is Homer protein homolog 2 from Homo sapiens (Human).